The following is a 203-amino-acid chain: Large ribosomal subunit protein bL25 (203 aa).

This sequence belongs to the bacterial ribosomal protein bL25 family. CTC subfamily. Part of the 50S ribosomal subunit; part of the 5S rRNA/L5/L18/L25 subcomplex. Contacts the 5S rRNA. Binds to the 5S rRNA independently of L5 and L18.

In terms of biological role, this is one of the proteins that binds to the 5S RNA in the ribosome where it forms part of the central protuberance. This Wolbachia pipientis subsp. Culex pipiens (strain wPip) protein is Large ribosomal subunit protein bL25.